Here is a 294-residue protein sequence, read N- to C-terminus: Complement C1q tumor necrosis factor-related protein 2 (294 aa).

The N-terminal stretch at 1–24 is a signal peptide; the sequence is MTIFKKVTTMISWVLLACALPCAA. Residues 42-156 form a disordered region; that stretch reads QLVCSLPGPQ…PGPCSCGSSR (115 aa). A Collagen-like domain is found at 48–150; that stretch reads PGPQGPPGPP…KGEPGLPGPC (103 aa). Residues 50 to 59 are compositionally biased toward pro residues; sequence PQGPPGPPGA. Residues 75–87 are compositionally biased toward basic and acidic residues; the sequence is DGQDGQDGDRGDS. Positions 105–129 are enriched in low complexity; it reads KGKAGAIGRAGPRGPKGVSGTPGKH. The region spanning 154 to 290 is the C1q domain; sequence SSRAKSAFSV…GFLIYADQGD (137 aa).

As to quaternary structure, may interact with ERFE.

Its subcellular location is the secreted. Its function is as follows. Involved in the regulation of lipid metabolism in adipose tissue and liver. The sequence is that of Complement C1q tumor necrosis factor-related protein 2 (C1qtnf2) from Mus musculus (Mouse).